A 427-amino-acid chain; its full sequence is Glutamate-1-semialdehyde 2,1-aminomutase (427 aa).

Lys267 carries the post-translational modification N6-(pyridoxal phosphate)lysine.

Belongs to the class-III pyridoxal-phosphate-dependent aminotransferase family. HemL subfamily. Homodimer. The cofactor is pyridoxal 5'-phosphate.

It localises to the cytoplasm. The enzyme catalyses (S)-4-amino-5-oxopentanoate = 5-aminolevulinate. Its pathway is porphyrin-containing compound metabolism; protoporphyrin-IX biosynthesis; 5-aminolevulinate from L-glutamyl-tRNA(Glu): step 2/2. This chain is Glutamate-1-semialdehyde 2,1-aminomutase, found in Geotalea uraniireducens (strain Rf4) (Geobacter uraniireducens).